The primary structure comprises 1091 residues: Protein CTR9 homolog (1091 aa).

A2 is subject to N-acetylalanine. TPR repeat units lie at residues 90 to 127, 128 to 161, 163 to 195, 197 to 230, 232 to 267, 305 to 338, 343 to 376, 377 to 410, 412 to 443, 449 to 482, 558 to 591, 593 to 625, 640 to 673, 674 to 707, 713 to 746, and 749 to 782; these read GAYYSYLGKTETKNREKEEQFISATRYYNKASRIDMHE, PSTWVGKGQLLLAKGEIDNALQAFKIVLDTAPDN, PALLGQASVEFNRGRFSESLQLYKRALQVFPGC, AAVRLGIGLCRYKLGQLDKARQAFDRVLQLDPDN, EALVALGIMDLQANDSIGMRKGMDRMQQAFEIYPYC, SHSFYNLARSYHSKGDFEKAGMYYMAAIKETNNN, VFPYFGLGQVQLKLGELKGSVFNFEKVLEVYPDN, CETLKALGHLYTQLGQNEKALEYMRKATKLDPRD, QAFVGLGELLISSDTGAALDAFKMARTLMKKG, IEVLNDIGALHFEREEFESALENFKEALGDGIWI, IDAYLRLAASAKAQNNLPLAIELVNEALKVDDKN, NALSLLGELELKNDDWVKAKETFRAANDATDGK, AAMRNEKRNPKLEATHLEKAKELYTKVLTQHNSN, MYAANGSGIVLAEKGQFDIAKDVFTQVQEAASGS, PDVWVNLAHVYFAQGNFALTVKMYQNCLRKFFYN, and SQILLYLARTHYEAEQWQECKKTLLRAIHLTPSN. Residues 919 to 1091 form a disordered region; that stretch reads FQRIKEQWKS…EEEEEEEEAN (173 aa). The span at 951–965 shows a compositional bias: basic residues; it reads ERRRKKGGKRRKKDK. Composition is skewed to acidic residues over residues 974–993, 1003–1016, 1026–1035, and 1080–1091; these read DDEEEAATMDDHNEVEDEDA, MTTQEAEEPVDDDA, EDPDVDDDEV, and NMEEEEEEEEAN.

As to quaternary structure, component of the nuclear PAF1 complex (PAF1C), which consists of VIP2/ELF7/PAF1, VIP3/SKI8/WDR61, VIP4/LEO1, VIP5/RTF1, VIP6/ELF8/CTR9 and CDC73. Interacts with VIP3 and VIP4. In terms of tissue distribution, expressed in roots, leaves and shoot apex.

The protein resides in the nucleus. Component of the PAF1 complex (PAF1C) which is involved in histone modifications such as methylation on histone H3 'Lys-4' (H3K4me3). Involved in regulation of flowering time. Required for the expression of the MADS box genes and flowering repressors FLC, AGL27/FLM and AGL31/MAF2. Required for histone H3 trimethylation on 'Lys-4' H3K4me3 at the FLC and AGL27/FLM loci. Involved in the control of seed dormancy and germination. This Arabidopsis thaliana (Mouse-ear cress) protein is Protein CTR9 homolog.